A 160-amino-acid polypeptide reads, in one-letter code: Endoribonuclease YbeY (160 aa).

Residues His125, His129, and His135 each contribute to the Zn(2+) site.

The protein belongs to the endoribonuclease YbeY family. Zn(2+) serves as cofactor.

The protein localises to the cytoplasm. Its function is as follows. Single strand-specific metallo-endoribonuclease involved in late-stage 70S ribosome quality control and in maturation of the 3' terminus of the 16S rRNA. The chain is Endoribonuclease YbeY from Leuconostoc citreum (strain KM20).